A 339-amino-acid chain; its full sequence is Phenylalanine--tRNA ligase alpha subunit (339 aa).

E254 contacts Mg(2+).

It belongs to the class-II aminoacyl-tRNA synthetase family. Phe-tRNA synthetase alpha subunit type 1 subfamily. As to quaternary structure, tetramer of two alpha and two beta subunits. Requires Mg(2+) as cofactor.

The protein resides in the cytoplasm. The enzyme catalyses tRNA(Phe) + L-phenylalanine + ATP = L-phenylalanyl-tRNA(Phe) + AMP + diphosphate + H(+). This is Phenylalanine--tRNA ligase alpha subunit from Clostridium novyi (strain NT).